Reading from the N-terminus, the 333-residue chain is uncharacterized protein (333 aa).

This is an uncharacterized protein from Caenorhabditis elegans.